The chain runs to 225 residues: Pre-mRNA-splicing factor SPF27 (225 aa).

Residues 138 to 222 (SNDNLALMIE…QGDENKENIR (85 aa)) are a coiled coil.

The protein belongs to the SPF27 family. In terms of assembly, component of the pre-catalytic and catalytic spliceosome complexes. Component of the postcatalytic spliceosome P complex.

It localises to the nucleus. Required for pre-mRNA splicing as component of the activated spliceosome. May have a scaffolding role in the spliceosome assembly as it contacts all other components of the core complex. This is Pre-mRNA-splicing factor SPF27 (bcas2) from Danio rerio (Zebrafish).